A 122-amino-acid polypeptide reads, in one-letter code: Large ribosomal subunit protein uL18 (122 aa).

Residues 1–24 (MSTLSRKQQTQKRHRRLRRHLSGT) form a disordered region. Basic residues predominate over residues 9–21 (QTQKRHRRLRRHL).

This sequence belongs to the universal ribosomal protein uL18 family. As to quaternary structure, part of the 50S ribosomal subunit; part of the 5S rRNA/L5/L18/L25 subcomplex. Contacts the 5S and 23S rRNAs.

Its function is as follows. This is one of the proteins that bind and probably mediate the attachment of the 5S RNA into the large ribosomal subunit, where it forms part of the central protuberance. The polypeptide is Large ribosomal subunit protein uL18 (Synechococcus sp. (strain WH7803)).